The primary structure comprises 387 residues: Paralemmin-1 (387 aa).

N-acetylmethionine is present on Met-1. Positions 9–101 (TSQQERLQAI…EKEIEVLERG (93 aa)) form a coiled coil. Composition is skewed to basic and acidic residues over residues 31–41 (KRRQLEDERRQ) and 69–102 (DLRRQMQDDEQKTRLLEDSVSRLEKEIEVLERGD). The tract at residues 31–160 (KRRQLEDERR…VSNTPLRTVD (130 aa)) is disordered. The span at 104-117 (APATAKENAAAPSP) shows a compositional bias: low complexity. Phosphoserine occurs at positions 116 and 124. Phosphothreonine is present on residues Thr-141 and Thr-145. Ser-162 is modified (phosphoserine). Thr-243 is modified (phosphothreonine). Position 245 is a phosphoserine (Ser-245). Disordered stretches follow at residues 247-296 (AGST…GQEP) and 335-378 (AEPK…DMKK). Residues 286–296 (GPPGIQPGQEP) are compositionally biased toward low complexity. Ser-346 is subject to Phosphoserine. A Phosphothreonine modification is found at Thr-367. Ser-369 bears the Phosphoserine mark. S-palmitoyl cysteine attachment occurs at residues Cys-381 and Cys-383. A Cysteine methyl ester modification is found at Cys-384. The S-farnesyl cysteine moiety is linked to residue Cys-384. Positions 385-387 (SIM) are cleaved as a propeptide — removed in mature form.

It belongs to the paralemmin family. As to quaternary structure, interacts with dopamine receptor DRD3. As to expression, widely expressed with highest expression in brain and testis and intermediate expression in heart and adrenal gland.

It is found in the cell membrane. The protein localises to the cell projection. Its subcellular location is the filopodium membrane. The protein resides in the axon. It localises to the dendrite. It is found in the dendritic spine. The protein localises to the basolateral cell membrane. Its subcellular location is the apicolateral cell membrane. Its function is as follows. Involved in plasma membrane dynamics and cell process formation. Isoform 1 and isoform 2 are necessary for axonal and dendritic filopodia induction, for dendritic spine maturation and synapse formation in a palmitoylation-dependent manner. This Homo sapiens (Human) protein is Paralemmin-1 (PALM).